A 40-amino-acid polypeptide reads, in one-letter code: Natriuretic peptide PaNP-b (40 aa).

A disulfide bridge connects residues Cys9 and Cys25. Residues Ile36–Ser40 constitute a propeptide that is removed on maturation.

It belongs to the natriuretic peptide family. In terms of tissue distribution, expressed by the venom gland.

The protein resides in the secreted. Its function is as follows. Snake venom natriuretic peptide that targets both NPR1 and NPR2. Exhibits hypotensive and vasodepressor activities. The polypeptide is Natriuretic peptide PaNP-b (Pseudechis australis (Mulga snake)).